A 426-amino-acid chain; its full sequence is MVRLITYPSIDADNYLQKKTLDDANVSVQVAQVLETIRCRGVEAVFEYTKRFDGATVNEANFRVSEAEIDEAYSKVDPEVLAALRRARDNIRRYHEKQLRPSWIEPEADGTMLGQLIRPLERVGTYVPGGLASYPSSVLMNAVPAKVAGVPQVVMATPPGKDGSINPYTLVAAREAGVDEIYRMGGAQAVAAMAYGAGLKAVDKITGPGNIYVTLAKKQVYGTVDIDMLAGPSEILVIADETAPPAYVAADFLSQVEHDVRAAAVLVTPSEILARAVEGEIQRQMDYLPRREIMEQALKDNSAVIVVKDLDEACEVANRYAPEHLEVLTKEPFALLGKLTQAGAIFLGPYSPEPVGDYYAGPNHVLPTGGTARFYSPLNVDTFMKKTSVIAYSKARFEQAADDILALAKCEGLDAHANAVAVRIEK.

The NAD(+) site is built by Tyr126, Gln188, and Asn210. Substrate contacts are provided by Ser233, Gln255, and His258. Zn(2+) contacts are provided by Gln255 and His258. Catalysis depends on proton acceptor residues Glu323 and His324. The substrate site is built by His324, Asp357, Glu411, and His416. Residue Asp357 coordinates Zn(2+). His416 contributes to the Zn(2+) binding site.

This sequence belongs to the histidinol dehydrogenase family. The cofactor is Zn(2+).

It carries out the reaction L-histidinol + 2 NAD(+) + H2O = L-histidine + 2 NADH + 3 H(+). It participates in amino-acid biosynthesis; L-histidine biosynthesis; L-histidine from 5-phospho-alpha-D-ribose 1-diphosphate: step 9/9. Its function is as follows. Catalyzes the sequential NAD-dependent oxidations of L-histidinol to L-histidinaldehyde and then to L-histidine. This Heliobacterium mobile (Heliobacillus mobilis) protein is Histidinol dehydrogenase.